A 618-amino-acid polypeptide reads, in one-letter code: Tyrosine-protein kinase ZAP-70 (618 aa).

Residues 10–102 (FFYGSISRAE…GLPCNLRKPC (93 aa)) form the SH2 1 domain. An interdomain A region spans residues 103 to 162 (NRPPGLEPQPGVFDCLRDAMVRDYVRQTWKLEGDALEQAIISQAPQVEKLIATTAHERMP). Residues 163-254 (WYHSSLTREE…GLIYRLKEVC (92 aa)) form the SH2 2 domain. Position 248 is a phosphotyrosine (Y248). The interval 255-336 (PNSSASAAVA…KKLFLKRENL (82 aa)) is interdomain B. The segment at 270-320 (AHPSTFTQPQRRVDTLNSDGYTPEPARLASSTDKPRPMPMDTSVYESPYSD) is disordered. Residues 273 to 289 (STFTQPQRRVDTLNSDG) are compositionally biased toward polar residues. At S287 the chain carries Phosphoserine. Y290 bears the Phosphotyrosine mark. Position 314 is a phosphotyrosine; by LCK (Y314). Y318 carries the phosphotyrosine modification. The Protein kinase domain maps to 337 to 597 (LVADIELGCG…VEQRMRNYYY (261 aa)). ATP is bound by residues 343 to 351 (LGCGNFGSV) and K368. Catalysis depends on D460, which acts as the Proton acceptor. Residues Y491 and Y492 each carry the phosphotyrosine modification. Residue K543 forms a Glycyl lysine isopeptide (Lys-Gly) (interchain with G-Cter in ubiquitin) linkage.

It belongs to the protein kinase superfamily. Tyr protein kinase family. SYK/ZAP-70 subfamily. In terms of assembly, interacts with CD247/CD3Z; this interaction docks ZAP70 at the stimulated TCR. Interacts with NFAM1. Interacts with adapter protein SLA; this interaction negatively regulates T-cell receptor signaling. Interacts with VAV1. Interacts with CBL; this interaction promotes ubiquitination, internalization and subsequent degradation of CD247/CD3Z. Identified in a complex with CBL and UBE2L3. Interacts with SHB. Interacts with adapter protein SLA2; this interaction negatively regulates T-cell receptor signaling. Interacts with CBLB. Interacts (via SH2 domains) with RHOH; this interaction regulates ZAP70 subcellular localization. Interacts with DEF6. Interacts (ubiquitinated form) with OTUD7B and UBASH3B. In terms of processing, phosphorylated on tyrosine residues upon T-cell antigen receptor (TCR) stimulation. Phosphorylation of Tyr-314 and Tyr-314 are essential for ZAP70 positive function on T-lymphocyte activation whereas Tyr-290 has a negative regulatory role. Within the C-terminal kinase domain, Tyr-491 and Tyr-492 are phosphorylated after TCR induction, Tyr-491 playing a negative regulatory role and Tyr-492 a positive. Tyr-492 is dephosphorylated by PTN22. Post-translationally, ubiquitinated in response to T cell activation. Deubiquitinated by OTUD7B. Isoform 1 and isoform 2 are expressed in thymus, spleen and lymph nodes.

It is found in the cytoplasm. It localises to the cell membrane. The enzyme catalyses L-tyrosyl-[protein] + ATP = O-phospho-L-tyrosyl-[protein] + ADP + H(+). Its activity is regulated as follows. Activated by phosphorylation at Tyr-492 in the activation loop. In terms of biological role, tyrosine kinase that plays an essential role in regulation of the adaptive immune response. Regulates motility, adhesion and cytokine expression of mature T-cells, as well as thymocyte development. Also contributes to the development and activation of primary B-lymphocytes. When antigen presenting cells (APC) activate T-cell receptor (TCR), a serie of phosphorylations lead to the recruitment of ZAP70 to the doubly phosphorylated TCR component CD3Z through ITAM motif at the plasma membrane. This recruitment serves to localization to the stimulated TCR and to relieve its autoinhibited conformation. Release of ZAP70 active conformation is further stabilized by phosphorylation mediated by LCK. Subsequently, ZAP70 phosphorylates at least 2 essential adapter proteins: LAT and LCP2. In turn, a large number of signaling molecules are recruited and ultimately lead to lymphokine production, T-cell proliferation and differentiation. Furthermore, ZAP70 controls cytoskeleton modifications, adhesion and mobility of T-lymphocytes, thus ensuring correct delivery of effectors to the APC. ZAP70 is also required for TCR-CD3Z internalization and degradation through interaction with the E3 ubiquitin-protein ligase CBL and adapter proteins SLA and SLA2. Thus, ZAP70 regulates both T-cell activation switch on and switch off by modulating TCR expression at the T-cell surface. During thymocyte development, ZAP70 promotes survival and cell-cycle progression of developing thymocytes before positive selection (when cells are still CD4/CD8 double negative). Additionally, ZAP70-dependent signaling pathway may also contribute to primary B-cells formation and activation through B-cell receptor (BCR). The polypeptide is Tyrosine-protein kinase ZAP-70 (Zap70) (Mus musculus (Mouse)).